The primary structure comprises 473 residues: Sphingosine kinase 1 (473 aa).

A DAGKc domain is found at 83–233 (QCRGNLLVFI…VALYSVKTDN (151 aa)). Residues 93–95 (NPN) and 125–129 (TTGPN) contribute to the ATP site. Residue 151–154 (SGDG) coordinates substrate. Asp153 acts as the Proton donor/acceptor in catalysis. ATP-binding positions include Glu158 and 184-186 (GSG). Asp251 lines the substrate pocket. Residues Arg258, Arg265, and 448–450 (DGE) each bind ATP.

Mg(2+) is required as a cofactor. In terms of tissue distribution, expressed in the majority of cholinergic and GABAergic neurons, body wall muscle, excretory canal cells, intestine, and hypodermis.

It is found in the presynaptic cell membrane. Its subcellular location is the cell projection. It localises to the axon. The protein localises to the perikaryon. The protein resides in the mitochondrion membrane. The catalysed reaction is a sphingoid base + ATP = a sphingoid 1-phosphate + ADP + H(+). It carries out the reaction 15-methylhexadecasphing-4-enine + ATP = 15-methylhexadecasphing-4-enine 1-phosphate + ADP + H(+). It catalyses the reaction 15-methylhexadecasphinganine + ATP = 15-methylhexadecasphinganine 1-phosphate + ADP + H(+). It participates in lipid metabolism; sphingolipid metabolism. Catalyzes the phosphorylation of sphingoid bases to form sphingoid 1-phosphate (SPP), which have both intra- and extracellular functions. C.elegans contain specific sphingoid bases, which are unique or different in structure compared to the sphingoid bases found in other animals. Two examples of these distinctive compounds are: 15-methylhexadecasphinganine and 15-methylhexadecasphing-4-enine. Required for neurotransmitter release from neuromuscular junctions. Acts by recruiting the synaptic vesicle priming protein unc-13 to synapses. The protein is Sphingosine kinase 1 (sphk-1) of Caenorhabditis elegans.